A 430-amino-acid chain; its full sequence is Type II methyltransferase M.Sau96I (430 aa).

An HTH cro/C1-type domain is found at 9-63 (IEKMKNQNIKTQTELAEKIDISKSQLSFMFSDEYEPLKKNVIKLADVLKVSPNDI). In terms of domain architecture, SAM-dependent MTase C5-type spans 99-429 (YNVFETFAGA…KSLVHYLNQF (331 aa)). C174 is a catalytic residue.

The protein belongs to the class I-like SAM-binding methyltransferase superfamily. C5-methyltransferase family.

It carries out the reaction a 2'-deoxycytidine in DNA + S-adenosyl-L-methionine = a 5-methyl-2'-deoxycytidine in DNA + S-adenosyl-L-homocysteine + H(+). Its function is as follows. A methylase that recognizes the double-stranded sequence 5'-GGNCC-3', methylates C-4 on both strands, and protects the DNA from cleavage by the Sau96I endonuclease. The sequence is that of Type II methyltransferase M.Sau96I from Staphylococcus aureus.